Here is a 142-residue protein sequence, read N- to C-terminus: FAD synthase (142 aa).

Residues 9-10 (TF), 14-17 (HPGH), and Asp92 each bind ATP.

It belongs to the archaeal FAD synthase family. As to quaternary structure, homodimer. Requires a divalent metal cation as cofactor.

It carries out the reaction FMN + ATP + H(+) = FAD + diphosphate. It functions in the pathway cofactor biosynthesis; FAD biosynthesis; FAD from FMN: step 1/1. In terms of biological role, catalyzes the transfer of the AMP portion of ATP to flavin mononucleotide (FMN) to produce flavin adenine dinucleotide (FAD) coenzyme. The sequence is that of FAD synthase from Methanohalophilus mahii (strain ATCC 35705 / DSM 5219 / SLP).